The chain runs to 281 residues: 18S rRNA (guanine-N(7))-methyltransferase (281 aa).

Positions 212–231 are enriched in polar residues; it reads LPKGLTESQDADQASESMFT. The disordered stretch occupies residues 212–281; it reads LPKGLTESQD…YTGRKRKPRF (70 aa). A compositionally biased stretch (basic and acidic residues) spans 242–256; the sequence is RDLVKKSREWVLEKK.

This sequence belongs to the class I-like SAM-binding methyltransferase superfamily. BUD23/WBSCR22 family. Heterodimer with TRMT112; this heterodimerization is necessary for the metabolic stability and activity of the catalytic subunit BUD23. Interacts with GRIP1. Post-translationally, may be ubiquitinated and targeted to degradation in response to pro-inflammatory cytokine signaling.

It is found in the nucleus. It localises to the nucleoplasm. The protein localises to the cytoplasm. Its subcellular location is the perinuclear region. The enzyme catalyses a guanosine in 18S rRNA + S-adenosyl-L-methionine = an N(7)-methylguanosine in 18S rRNA + S-adenosyl-L-homocysteine. Functionally, S-adenosyl-L-methionine-dependent methyltransferase that specifically methylates the N(7) position of a guanine in 18S rRNA. Requires the methyltransferase adapter protein TRM112 for full rRNA methyltransferase activity. Involved in the pre-rRNA processing steps leading to small-subunit rRNA production independently of its RNA-modifying catalytic activity. Important for biogenesis end export of the 40S ribosomal subunit independent on its methyltransferase activity. Locus-specific steroid receptor coactivator. Potentiates transactivation by glucocorticoid (NR3C1), mineralocorticoid (NR3C2), androgen (AR) and progesterone (PGR) receptors. Required for the maintenance of open chromatin at the TSC22D3/GILZ locus to facilitate NR3C1 loading on the response elements. Required for maintenance of dimethylation on histone H3 'Lys-79' (H3K79me2), although direct histone methyltransferase activity is not observed in vitro. This chain is 18S rRNA (guanine-N(7))-methyltransferase, found in Mus musculus (Mouse).